The sequence spans 274 residues: Orotidine 5'-phosphate decarboxylase (274 aa).

Residue Lys-96 is the Proton donor of the active site.

Belongs to the OMP decarboxylase family. Type 2 subfamily.

The enzyme catalyses orotidine 5'-phosphate + H(+) = UMP + CO2. The protein operates within pyrimidine metabolism; UMP biosynthesis via de novo pathway; UMP from orotate: step 2/2. The polypeptide is Orotidine 5'-phosphate decarboxylase (Bacteroides fragilis (strain YCH46)).